Reading from the N-terminus, the 379-residue chain is Chaperone protein DnaJ (379 aa).

The 65-residue stretch at 5 to 69 (EFYDRLGVSK…QKRAAYDQYG (65 aa)) folds into the J domain. The CR-type zinc finger occupies 135 to 217 (GAEKEVSYNR…CHGTGHEKKT (83 aa)). Zn(2+)-binding residues include cysteine 148, cysteine 151, cysteine 165, cysteine 168, cysteine 191, cysteine 194, cysteine 205, and cysteine 208. CXXCXGXG motif repeat units lie at residues 148 to 155 (CHTCSGSG), 165 to 172 (CQKCHGSG), 191 to 198 (CDVCQGSG), and 205 to 212 (CPTCHGTG).

This sequence belongs to the DnaJ family. As to quaternary structure, homodimer. Zn(2+) serves as cofactor.

Its subcellular location is the cytoplasm. Functionally, participates actively in the response to hyperosmotic and heat shock by preventing the aggregation of stress-denatured proteins and by disaggregating proteins, also in an autonomous, DnaK-independent fashion. Unfolded proteins bind initially to DnaJ; upon interaction with the DnaJ-bound protein, DnaK hydrolyzes its bound ATP, resulting in the formation of a stable complex. GrpE releases ADP from DnaK; ATP binding to DnaK triggers the release of the substrate protein, thus completing the reaction cycle. Several rounds of ATP-dependent interactions between DnaJ, DnaK and GrpE are required for fully efficient folding. Also involved, together with DnaK and GrpE, in the DNA replication of plasmids through activation of initiation proteins. This is Chaperone protein DnaJ from Streptococcus agalactiae serotype V (strain ATCC BAA-611 / 2603 V/R).